Consider the following 454-residue polypeptide: Ribosomal protein uS12 methylthiotransferase RimO (454 aa).

The 116-residue stretch at 9–124 (PKIGFVSLGC…VMDAVHLHMP (116 aa)) folds into the MTTase N-terminal domain. [4Fe-4S] cluster contacts are provided by cysteine 18, cysteine 54, cysteine 83, cysteine 155, cysteine 159, and cysteine 162. A Radical SAM core domain is found at 141–382 (LTPKHFAYLK…MLLQEEISKK (242 aa)). One can recognise a TRAM domain in the interval 385-454 (QAKVGKTMRV…ADAHDLWAEA (70 aa)).

This sequence belongs to the methylthiotransferase family. RimO subfamily. [4Fe-4S] cluster is required as a cofactor.

Its subcellular location is the cytoplasm. It catalyses the reaction L-aspartate(89)-[ribosomal protein uS12]-hydrogen + (sulfur carrier)-SH + AH2 + 2 S-adenosyl-L-methionine = 3-methylsulfanyl-L-aspartate(89)-[ribosomal protein uS12]-hydrogen + (sulfur carrier)-H + 5'-deoxyadenosine + L-methionine + A + S-adenosyl-L-homocysteine + 2 H(+). Functionally, catalyzes the methylthiolation of an aspartic acid residue of ribosomal protein uS12. This chain is Ribosomal protein uS12 methylthiotransferase RimO, found in Herminiimonas arsenicoxydans.